The sequence spans 86 residues: MSLLDYFRAKKEPTTATTAKERLQIIVAHQRGERDAPDYFPAMKQEIIEVIRKYVQIDSDQVSVQLDQNDDNLSVLELNVTLPEKP.

It belongs to the MinE family.

Prevents the cell division inhibition by proteins MinC and MinD at internal division sites while permitting inhibition at polar sites. This ensures cell division at the proper site by restricting the formation of a division septum at the midpoint of the long axis of the cell. The protein is Cell division topological specificity factor of Shewanella loihica (strain ATCC BAA-1088 / PV-4).